A 177-amino-acid chain; its full sequence is Large ribosomal subunit protein uL6 (177 aa).

This sequence belongs to the universal ribosomal protein uL6 family. In terms of assembly, part of the 50S ribosomal subunit.

Functionally, this protein binds to the 23S rRNA, and is important in its secondary structure. It is located near the subunit interface in the base of the L7/L12 stalk, and near the tRNA binding site of the peptidyltransferase center. The protein is Large ribosomal subunit protein uL6 of Neisseria meningitidis serogroup B (strain ATCC BAA-335 / MC58).